The chain runs to 389 residues: uncharacterized protein (389 aa).

Transmembrane regions (helical) follow at residues 31–51 (LFIV…VEVI), 96–116 (IMQI…ALLV), 123–143 (APLV…MFPP), and 152–172 (MIDA…LPSS).

To M.tuberculosis Rv2571c.

The protein localises to the cell membrane. This is an uncharacterized protein from Corynebacterium glutamicum (strain ATCC 13032 / DSM 20300 / JCM 1318 / BCRC 11384 / CCUG 27702 / LMG 3730 / NBRC 12168 / NCIMB 10025 / NRRL B-2784 / 534).